The following is a 478-amino-acid chain: Ribulose bisphosphate carboxylase large chain (478 aa).

A propeptide spanning residues 1 to 2 (MS) is cleaved from the precursor. Residue P3 is modified to N-acetylproline. The residue at position 14 (K14) is an N6,N6,N6-trimethyllysine. 2 residues coordinate substrate: N123 and T173. Residue K175 is the Proton acceptor of the active site. K177 contacts substrate. Residues K201, D203, and E204 each contribute to the Mg(2+) site. Position 201 is an N6-carboxylysine (K201). The active-site Proton acceptor is the H294. Substrate contacts are provided by R295, H327, and S379.

It belongs to the RuBisCO large chain family. Type I subfamily. Heterohexadecamer of 8 large chains and 8 small chains; disulfide-linked. The disulfide link is formed within the large subunit homodimers. Requires Mg(2+) as cofactor. The disulfide bond which can form in the large chain dimeric partners within the hexadecamer appears to be associated with oxidative stress and protein turnover.

The protein localises to the plastid. Its subcellular location is the chloroplast. The catalysed reaction is 2 (2R)-3-phosphoglycerate + 2 H(+) = D-ribulose 1,5-bisphosphate + CO2 + H2O. It catalyses the reaction D-ribulose 1,5-bisphosphate + O2 = 2-phosphoglycolate + (2R)-3-phosphoglycerate + 2 H(+). In terms of biological role, ruBisCO catalyzes two reactions: the carboxylation of D-ribulose 1,5-bisphosphate, the primary event in carbon dioxide fixation, as well as the oxidative fragmentation of the pentose substrate in the photorespiration process. Both reactions occur simultaneously and in competition at the same active site. The polypeptide is Ribulose bisphosphate carboxylase large chain (Lemna minor (Common duckweed)).